A 434-amino-acid chain; its full sequence is Cytochrome c biogenesis protein CcsB (434 aa).

3 helical membrane-spanning segments follow: residues 15–35 (LRVAIVLLLLIAACSGLGTAI), 73–93 (SNWFLLLLAWLGLALLLCSLR), and 163–183 (VGPLLVHTGLIVFMVGAVVGA).

Belongs to the Ccs1/CcsB family. As to quaternary structure, may interact with CcsA.

It localises to the cellular thylakoid membrane. Its function is as follows. Required during biogenesis of c-type cytochromes (cytochrome c6 and cytochrome f) at the step of heme attachment. The protein is Cytochrome c biogenesis protein CcsB of Synechococcus sp. (strain RCC307).